Reading from the N-terminus, the 142-residue chain is MKTYQAKESEVAREWYLIDAEGQVLGRMASEIARRLRGKHKPEYTPHVDTGDFIVVVNAEKMVLTGKKLRDKIYYHHSGYPGGLKEKTAGKMMQEKPTDVLWLAVKGMLPKNSLGRRMLRKLKVYAGNDHRHEAQCPKVLPL.

It belongs to the universal ribosomal protein uL13 family. Part of the 50S ribosomal subunit.

Its function is as follows. This protein is one of the early assembly proteins of the 50S ribosomal subunit, although it is not seen to bind rRNA by itself. It is important during the early stages of 50S assembly. This Syntrophus aciditrophicus (strain SB) protein is Large ribosomal subunit protein uL13.